We begin with the raw amino-acid sequence, 239 residues long: Norbelladine 4'-O-methyltransferase (239 aa).

S-adenosyl-L-methionine-binding positions include valine 55, glutamate 77, glycine 79–valine 80, serine 85, aspartate 103, and alanine 132. A divalent metal cation is bound at residue aspartate 155. Aspartate 157 provides a ligand contact to S-adenosyl-L-methionine. Residues aspartate 181 and asparagine 182 each coordinate a divalent metal cation.

It belongs to the class I-like SAM-binding methyltransferase superfamily. Cation-dependent O-methyltransferase family. The cofactor is Mg(2+). As to expression, mostly expressed in bulbs, and, to a lower extent, in stems and roots.

It catalyses the reaction norbelladine + S-adenosyl-L-methionine = 4'-O-methylnorbelladine + S-adenosyl-L-homocysteine + H(+). Its pathway is alkaloid biosynthesis. In terms of biological role, 4'-O-methyltransferase converting norbelladine to 4'-O-methylnorbelladine. 4'-O-methylnorbelladine is a precursor to all Amaryllidaceae alkaloids such as galanthamine, lycorine and haemanthamine, and including haemanthamine- and crinamine-type alkaloids, promising anticancer agents. In Narcissus pseudonarcissus (Daffodil), this protein is Norbelladine 4'-O-methyltransferase.